The sequence spans 214 residues: Adenylate kinase (214 aa).

Residue 10–15 participates in ATP binding; the sequence is GAGKGT. The segment at 30 to 59 is NMP; the sequence is STGDMLRAAVKSGSELGKQAKDIMDAGKLV. Residues Thr-31, Arg-36, 57-59, 85-88, and Gln-92 contribute to the AMP site; these read KLV and GFPR. The interval 122 to 159 is LID; the sequence is GRRVHAPSGRVYHVKFNPPKVEGKDDVTGEELTTRKDD. ATP is bound by residues Arg-123 and 132–133; that span reads VY. Residues Arg-156 and Arg-167 each contribute to the AMP site. The residue at position 192 (Lys-192) is an N6-acetyllysine. Lys-200 is an ATP binding site.

The protein belongs to the adenylate kinase family. As to quaternary structure, monomer.

It is found in the cytoplasm. It carries out the reaction AMP + ATP = 2 ADP. The protein operates within purine metabolism; AMP biosynthesis via salvage pathway; AMP from ADP: step 1/1. Catalyzes the reversible transfer of the terminal phosphate group between ATP and AMP. Plays an important role in cellular energy homeostasis and in adenine nucleotide metabolism. The protein is Adenylate kinase of Escherichia coli O45:K1 (strain S88 / ExPEC).